We begin with the raw amino-acid sequence, 546 residues long: Chaperonin GroEL (546 aa).

Residues 30–33 (TLGP), K51, 87–91 (DGTTT), G415, 479–481 (NAA), and D495 each bind ATP.

This sequence belongs to the chaperonin (HSP60) family. As to quaternary structure, forms a cylinder of 14 subunits composed of two heptameric rings stacked back-to-back. Interacts with the co-chaperonin GroES.

It is found in the cytoplasm. It carries out the reaction ATP + H2O + a folded polypeptide = ADP + phosphate + an unfolded polypeptide.. In terms of biological role, together with its co-chaperonin GroES, plays an essential role in assisting protein folding. The GroEL-GroES system forms a nano-cage that allows encapsulation of the non-native substrate proteins and provides a physical environment optimized to promote and accelerate protein folding. This chain is Chaperonin GroEL, found in Xanthomonas campestris pv. phaseoli.